The chain runs to 560 residues: Choline/ethanolamine transporter FLVCR1 (560 aa).

Residues M1 to E43 are disordered. Over M1–P92 the chain is Cytoplasmic. Residues R93–Q117 traverse the membrane as a helical segment. Residues W118–S135 lie on the Extracellular side of the membrane. The helical transmembrane segment at P136–T163 threads the bilayer. The Cytoplasmic portion of the chain corresponds to R164–G165. The helical transmembrane segment at L166–C185 threads the bilayer. Residues G186 to L192 lie on the Extracellular side of the membrane. A helical transmembrane segment spans residues F193 to W221. Q207 serves as a coordination point for ethanolamine. The Cytoplasmic segment spans residues F222–E226. A helical membrane pass occupies residues V227–L252. Residues V253 to N270 lie on the Extracellular side of the membrane. N270 carries an N-linked (GlcNAc...) asparagine glycan. A helical transmembrane segment spans residues N271–A300. Topologically, residues F301–N336 are cytoplasmic. The helical transmembrane segment at I337–Y367 threads the bilayer. At Y368–E371 the chain is on the extracellular side. The helical transmembrane segment at E372–T400 threads the bilayer. Residues K401–T402 lie on the Cytoplasmic side of the membrane. The chain crosses the membrane as a helical span at residues Y403–L425. At N426–G428 the chain is on the extracellular side. Residues Y429 to I458 form a helical membrane-spanning segment. At T459–M466 the chain is on the cytoplasmic side. The helical transmembrane segment at S467–D492 threads the bilayer. Q476 serves as a coordination point for ethanolamine. Choline is bound at residue Q476. Residues Y493–S495 lie on the Extracellular side of the membrane. The chain crosses the membrane as a helical span at residues P496 to K518. Over S519–L560 the chain is Cytoplasmic. A Phosphoserine modification is found at S542.

This sequence belongs to the major facilitator superfamily. Feline leukemia virus subgroup C receptor (TC 2.A.1.28.1) family.

It localises to the cell membrane. The catalysed reaction is choline(out) = choline(in). It catalyses the reaction ethanolamine(in) = ethanolamine(out). The enzyme catalyses heme b(in) = heme b(out). In terms of biological role, uniporter that mediates the transport of extracellular choline and ethanolamine into cells, thereby playing a key role in phospholipid biosynthesis. Choline and ethanolamine are the precursors of phosphatidylcholine and phosphatidylethanolamine, respectively, the two most abundant phospholipids. Transport is not coupled with proton transport and is exclusively driven by the choline (or ethanolamine) gradient across the plasma membrane. Also acts as a heme b transporter that mediates heme efflux from the cytoplasm to the extracellular compartment. The polypeptide is Choline/ethanolamine transporter FLVCR1 (Flvcr1) (Mus terricolor (Earth-colored mouse)).